Reading from the N-terminus, the 612-residue chain is E3 ubiquitin-protein ligase synoviolin (612 aa).

Residues 1–4 lie on the Cytoplasmic side of the membrane; that stretch reads MFRT. The involved in FAM8A1 interaction stretch occupies residues 1–251; it reads MFRTAVMMAA…LFAIRPMYLA (251 aa). Residues 5–25 traverse the membrane as a helical segment; the sequence is AVMMAASLALTGAVVAHAYYL. The segment at 21 to 42 is interaction with SEL1L; sequence HAYYLKHQFYPTVVYLTKSSPS. Residues 26–41 lie on the Lumenal side of the membrane; that stretch reads KHQFYPTVVYLTKSSP. A helical membrane pass occupies residues 42–62; that stretch reads SMAVLYIQAFVLVFLLGKVMG. Topologically, residues 63–98 are cytoplasmic; that stretch reads KVFFGQLRAAEMEHLLERSWYAVTETCLAFTVFRDD. Residues 99 to 119 form a helical membrane-spanning segment; it reads FSPRFVALFTLLLFLKCFHWL. Residues 120 to 140 are Lumenal-facing; that stretch reads AEDRVDFMERSPNISWLFHCR. The chain crosses the membrane as a helical span at residues 141 to 161; it reads IVSLMFLLGILDFLFVSHAYH. Over 162-169 the chain is Cytoplasmic; the sequence is SILTRGAS. Residues 170–190 traverse the membrane as a helical segment; sequence VQLVFGFEYAILMTMVLTIFI. Residues 191 to 224 are Lumenal-facing; it reads KYVLHSVDLQSENPWDNKAVYMLYTELFTGFIKV. A helical transmembrane segment spans residues 225 to 245; the sequence is LLYMAFMTIMIKVHTFPLFAI. The segment at 236–270 is interaction with p53/TP53; it reads KVHTFPLFAIRPMYLAMRQFKKAVTDAIMSRRAIR. At 246 to 612 the chain is on the cytoplasmic side; it reads RPMYLAMRQF…LQKLESPVAH (367 aa). The Zn(2+) site is built by Cys-291, Cys-294, Cys-307, His-309, His-312, Cys-315, Cys-326, and Cys-329. The segment at 291-330 adopts an RING-type; atypical zinc-finger fold; the sequence is CIICREEMVTGAKRLPCNHIFHTSCLRSWFQRQQTCPTCR. Disordered regions lie at residues 337–375 and 393–449; these read SLPAQSPPPPEPADQGPPPAPHPQPLLPQPPNFPQGLLP and PVPP…PGFP. Composition is skewed to pro residues over residues 341 to 375 and 393 to 409; these read QSPPPPEPADQGPPPAPHPQPLLPQPPNFPQGLLP and PVPPPPSSGEAAAPPPT. Positions 416-434 are enriched in low complexity; that stretch reads PSGAATTTAAGTSTSAPAP. The span at 435–449 shows a compositional bias: pro residues; sequence GSVPGPEAGPAPGFP. The tract at residues 474 to 529 is HAF-H domain; necessary to form higher-order Hrd1 complexes; it reads GFAGLTPEELRALEGHERQHLEARLQSLRNIHTLLDAAMLQINQYLTVLASLGPPR. The disordered stretch occupies residues 530–612; the sequence is PATSVNPTEE…LQKLESPVAH (83 aa). Residues 539–559 show a composition bias toward low complexity; the sequence is ETASTVVSAAPSTSAPSSEAP. The span at 560 to 570 shows a compositional bias: pro residues; that stretch reads TPSPGASPPIP. Residues 586-595 are compositionally biased toward acidic residues; the sequence is ELPEDGEPDA. A Phosphoserine modification is found at Ser-608.

This sequence belongs to the HRD1 family. Homodimer. Interacts with p53/TP53. Interacts with HTT. Component of the HRD1 complex, which comprises at least SYNV1/HRD1, DERL1/2, FAM8A1, HERPUD1/HERP, OS9, SEL1L and UBE2J1. FAM8A1 is stabilized by interaction with SYNV1, which prevents its proteasomal degradation. OS9 and UBE2J1 recruitment to the complex may be mediated by SEL1L. SYNV1 assembles with SEL1L and FAM8A1 through its transmembrane domains, but interaction with its cytoplasmic domain is required to confer stability to FAM8A1 and enhance recruitment of HERPUD1. The HRD1 complex also associates with VIMP and may transfer misfolded proteins from the endoplasmic reticulum to VCP. May form a complex with ERLEC1; HSPA5; OS9 and SEL1L. Interacts with VCP. Interacts with UBXN6. Interacts with BAG6. Interacts with NFE2L1. Interacts (via N-terminus) with components of the pre-B cell receptor, including IGLL1 and VPREB1A. Interacts with CREB3L3; this interaction leads to CREB3L3 ubiquitination and proteasomal degradation. In terms of processing, auto-ubiquitinated. Deubiquitinated by USP19. Widely expressed, with highest levels in bone, spleen, lung and testis. In the brain, present in neurons but not in glial cells. Up-regulated in synovial tissues from mice with collagen-induced arthritis (at protein level). Expressed in the liver.

The protein localises to the endoplasmic reticulum membrane. It carries out the reaction S-ubiquitinyl-[E2 ubiquitin-conjugating enzyme]-L-cysteine + [acceptor protein]-L-lysine = [E2 ubiquitin-conjugating enzyme]-L-cysteine + N(6)-ubiquitinyl-[acceptor protein]-L-lysine.. It functions in the pathway protein modification; protein ubiquitination. E3 ubiquitin-protein ligase which accepts ubiquitin specifically from endoplasmic reticulum-associated UBC7 E2 ligase and transfers it to substrates, promoting their degradation. Component of the endoplasmic reticulum quality control (ERQC) system also called ER-associated degradation (ERAD) involved in ubiquitin-dependent degradation of misfolded endoplasmic reticulum proteins. Also promotes the degradation of normal but naturally short-lived proteins such as SGK. Protects cells from ER stress-induced apoptosis. Sequesters p53/TP53 in the cytoplasm and promotes its degradation, thereby negatively regulating its biological function in transcription, cell cycle regulation and apoptosis. Required for embryogenesis. Mediates the ubiquitination and subsequent degradation of cytoplasmic NFE2L1. During the early stage of B cell development, required for degradation of the pre-B cell receptor (pre-BCR) complex, hence supporting further differentiation into mature B cells. This is E3 ubiquitin-protein ligase synoviolin (Syvn1) from Mus musculus (Mouse).